The chain runs to 240 residues: UDP-2,3-diacylglucosamine hydrolase (240 aa).

Mn(2+)-binding residues include Asp-8, His-10, Asp-41, Asn-79, and His-114. 79–80 is a substrate binding site; the sequence is NR. 5 residues coordinate substrate: Asp-122, Ser-160, Asn-164, Lys-167, and His-195. Mn(2+) is bound by residues His-195 and His-197.

The protein belongs to the LpxH family. Mn(2+) serves as cofactor.

The protein localises to the cell inner membrane. It catalyses the reaction UDP-2-N,3-O-bis[(3R)-3-hydroxytetradecanoyl]-alpha-D-glucosamine + H2O = 2-N,3-O-bis[(3R)-3-hydroxytetradecanoyl]-alpha-D-glucosaminyl 1-phosphate + UMP + 2 H(+). It participates in glycolipid biosynthesis; lipid IV(A) biosynthesis; lipid IV(A) from (3R)-3-hydroxytetradecanoyl-[acyl-carrier-protein] and UDP-N-acetyl-alpha-D-glucosamine: step 4/6. In terms of biological role, hydrolyzes the pyrophosphate bond of UDP-2,3-diacylglucosamine to yield 2,3-diacylglucosamine 1-phosphate (lipid X) and UMP by catalyzing the attack of water at the alpha-P atom. Involved in the biosynthesis of lipid A, a phosphorylated glycolipid that anchors the lipopolysaccharide to the outer membrane of the cell. The sequence is that of UDP-2,3-diacylglucosamine hydrolase from Pectobacterium atrosepticum (strain SCRI 1043 / ATCC BAA-672) (Erwinia carotovora subsp. atroseptica).